Here is a 742-residue protein sequence, read N- to C-terminus: Dynein axonemal intermediate chain 4 (742 aa).

WD repeat units lie at residues 462-502 (HCEC…DFPV), 511-559 (KHTS…DCND), 631-671 (GHKG…PILT), and 674-713 (NTTN…IDPV).

In terms of assembly, part of the multisubunit axonemal dynein complex formed at least of two heavy chains and a number of intermediate and light chains. Associated with axonemal dynein subunits such as, DNAH2, DNAI3, and DYNLT1.

It localises to the cytoplasm. Its subcellular location is the cytoskeleton. The protein localises to the flagellum axoneme. The protein resides in the cilium axoneme. It is found in the dynein axonemal particle. Plays a critical role in the assembly of axonemal dynein complex, thereby playing a role in ciliary motility. The chain is Dynein axonemal intermediate chain 4 from Xenopus laevis (African clawed frog).